Reading from the N-terminus, the 510-residue chain is Chorion transcription factor Cf2 (510 aa).

Over residues 1–10 (MIKSTTNPQE) the composition is skewed to polar residues. Positions 1-40 (MIKSTTNPQEQRLPRPEDQSPAPPPPPPSSATTSTAAPAT) are disordered. A compositionally biased stretch (low complexity) spans 30–40 (SATTSTAAPAT). 2 C2H2-type zinc fingers span residues 74 to 97 (HYCP…QLCH) and 125 to 148 (HPCF…RLAH). The segment covering 222–237 (PEEQHHQQQLQAEHHH) has biased composition (basic and acidic residues). The disordered stretch occupies residues 222-279 (PEEQHHQQQLQAEHHHQQQHQQQQQQQQQQQELLEQQQREMQEQAQQQQVHHHQQDQD). A compositionally biased stretch (low complexity) spans 240-257 (QHQQQQQQQQQQQELLEQ). 5 consecutive C2H2-type zinc fingers follow at residues 366 to 388 (HKCP…RKIH), 401 to 423 (YTCS…TRIH), 429 to 451 (FRCG…LTTH), 457 to 479 (FHCG…IRTH), and 485 to 508 (YTCP…TKLH).

Isoform I is found in embryos, pupae and adult somatic tissue; isoform II occurs in embryos, pupae, ovaries, testis and to a lesser extent in adult somatic tissue.

It is found in the nucleus. In terms of biological role, transcriptional regulator; binds to the promoter region of Cp15. Also binds to its own promoter, thus having a probable autoregulatory role. This Drosophila melanogaster (Fruit fly) protein is Chorion transcription factor Cf2 (Cf2).